We begin with the raw amino-acid sequence, 261 residues long: Methyltransferase nsrG (261 aa).

Residues 49-141 (DVGAGNGPYA…AHQLRPGALF (93 aa)) are methyltransferase domain.

Belongs to the methyltransferase superfamily.

The protein operates within secondary metabolite biosynthesis. Its function is as follows. Methyltransferase; part of the gene cluster that mediates the biosynthesis of the tetrahydroxanthone dimer neosartorin, which exhibits antibacterial activity. The two different monomeric units appear to be synthesized by the same set of enzymes, among which the Baeyer-Villiger monooxygenase nsrF is the key enzyme for the divergence of the biosynthetic routes. The pathway begins with the synthesis of atrochrysone thioester by the polyketide synthase nsrB. The atrochrysone carboxyl ACP thioesterase nsrC then breaks the thioester bond and releases the atrochrysone carboxylic acid from AacuL. Atrochrysone carboxylic acid is decarboxylated by the decarboxylase nsrE, and oxidized by the anthrone oxygenase nsrD to yield emodin. Emodin is then reduced to emodin hydroquinone by the oxidoreductase nsrR. A-ring reduction by the short chain dehydrogenase nsrJ, dehydration by the scytalone dehydratase-like protein nsrI and probable spontaneous re-oxidation, results in overall deoxygenation to chrysophanol. The Baeyer-Villiger monooxygenase nsrF accepts chrysophanol as a substrate to insert one oxygen atom at two different positions to yield the precursors of both monomric units. NsrF is promiscuous/flexible in interacting with the 2 (non methylated and methylated) aromatic rings of chrysophanol, thus diverging the biosynthetic pathway at this point. After the hydrolysis of the lactones, methylesterification by the methyltransferase nsrG yields respectively moniliphenone and 2,2',6'-trihydroxy-4-methyl-6-methoxya-cyldiphenylmethanone. The next steps are the hydroxylation by the FAD-dependent monooxygenase nsrK, followed by isomerization by the monooxygenase nsrQ. The short chain dehydrogenase/reductase nsrO then catalyzes the C-5 ketoreduction to give the xanthone skeleton of blennolide C and 5-acetylblennolide A. The acetyltransferase nsrL has a strict substrate specificity and uses only blennolide A but not blennolide C to yield 5-acetylblennolide A as the single-acetylated product. In the final step of the biosynthesis, the heterodimerization of the 2 xanthones, blennolide C and 5-acetylblennolide A, is catalyzed by the cytochrome P450 monooxygenase nsrP. NsrP can utilize at least three different xanthones as its substrates to perform the dimerization reaction. This is Methyltransferase nsrG from Aspergillus novofumigatus (strain IBT 16806).